Reading from the N-terminus, the 884-residue chain is Alanine--tRNA ligase (884 aa).

Histidine 572, histidine 576, cysteine 673, and histidine 677 together coordinate Zn(2+).

This sequence belongs to the class-II aminoacyl-tRNA synthetase family. Zn(2+) is required as a cofactor.

Its subcellular location is the cytoplasm. The catalysed reaction is tRNA(Ala) + L-alanine + ATP = L-alanyl-tRNA(Ala) + AMP + diphosphate. In terms of biological role, catalyzes the attachment of alanine to tRNA(Ala) in a two-step reaction: alanine is first activated by ATP to form Ala-AMP and then transferred to the acceptor end of tRNA(Ala). Also edits incorrectly charged Ser-tRNA(Ala) and Gly-tRNA(Ala) via its editing domain. The polypeptide is Alanine--tRNA ligase (Xylella fastidiosa (strain M12)).